A 212-amino-acid chain; its full sequence is MSTSASGPEHEFVSKFLTLATLTEPKLPKSYTKPLKDVTNLGVPLPTLKYKYKQNRAKKLKLHQDQQGQDNAAVHLTLKKIQAPKFSIEHDFSPSDTILQIKQHLISEEKASHISEIKLLLKGKVLHDNLFLSDLKVTPANSTITVMIKPNPTISKEPEAEKSTNSPAPAPPQELTVPWDDIEALLKNNFENDQAAVRQVMERLQKGWSLAK.

Residues 74-152 enclose the Ubiquitin-like domain; sequence VHLTLKKIQA…TITVMIKPNP (79 aa). The segment at 150–177 is disordered; it reads PNPTISKEPEAEKSTNSPAPAPPQELTV.

In terms of assembly, interacts with GET4.

It localises to the cytoplasm. The protein localises to the cytosol. Its subcellular location is the nucleus. Functionally, required for efficient mating. Involved in the production of alpha-factor, the KAR9 and TUB1 location to the shmoo tip and nuclear migration into pheromone-induced shmoos. This chain is Ubiquitin-like protein MDY2 (MDY2), found in Saccharomyces cerevisiae (strain ATCC 204508 / S288c) (Baker's yeast).